Reading from the N-terminus, the 490-residue chain is GDP-fucose protein O-fucosyltransferase 2 (490 aa).

The signal sequence occupies residues 1–25 (MRGSWPRLGFPALLLLLHLLTGSDA). N-linked (GlcNAc...) asparagine glycosylation is found at Asn29 and Asn79. 81-85 (SEGFN) is a binding site for GDP-beta-L-fucose. Glu82 serves as the catalytic Proton acceptor. A disulfide bridge connects residues Cys203 and Cys226. GDP-beta-L-fucose is bound at residue 336-338 (HLR). Residue Asn368 is glycosylated (N-linked (GlcNAc...) asparagine). Residues Asp418 and 435-436 (TF) each bind GDP-beta-L-fucose. Cysteines 459 and 466 form a disulfide.

This sequence belongs to the glycosyltransferase 68 family.

The protein resides in the endoplasmic reticulum. It localises to the golgi apparatus. The enzyme catalyses L-seryl-[protein] + GDP-beta-L-fucose = 3-O-(alpha-L-fucosyl)-L-seryl-[protein] + GDP + H(+). It catalyses the reaction L-threonyl-[protein] + GDP-beta-L-fucose = 3-O-(alpha-L-fucosyl)-L-threonyl-[protein] + GDP + H(+). It participates in protein modification; protein glycosylation. Does not require divalent metal ions for optimal activity. In terms of biological role, catalyzes the reaction that attaches fucose through an O-glycosidic linkage to a conserved serine or threonine residue in the consensus sequence C1-X-X-S/T-C2 of thrombospondin type I repeats (TSRs) where C1 and C2 are the first and second cysteines of the repeat, respectively. O-fucosylates members of several protein families including the ADAMTS, the thrombospondin (TSP) and spondin families. This is GDP-fucose protein O-fucosyltransferase 2 from Drosophila melanogaster (Fruit fly).